The primary structure comprises 83 residues: Small ribosomal subunit protein uS17 (83 aa).

This sequence belongs to the universal ribosomal protein uS17 family. Part of the 30S ribosomal subunit.

Functionally, one of the primary rRNA binding proteins, it binds specifically to the 5'-end of 16S ribosomal RNA. The sequence is that of Small ribosomal subunit protein uS17 from Chlamydia muridarum (strain MoPn / Nigg).